Consider the following 301-residue polypeptide: Small ribosomal subunit protein uS2 (301 aa).

The protein belongs to the universal ribosomal protein uS2 family. In terms of assembly, component of the small ribosomal subunit. Mature ribosomes consist of a small (40S) and a large (60S) subunit. The 40S subunit contains about 33 different proteins and 1 molecule of RNA (18S). The 60S subunit contains about 49 different proteins and 3 molecules of RNA (28S, 5.8S and 5S). Interacts with ribosomal protein S21.

It is found in the cytoplasm. In terms of biological role, required for the assembly and/or stability of the 40S ribosomal subunit. Required for the processing of the 20S rRNA-precursor to mature 18S rRNA in a late step of the maturation of 40S ribosomal subunits. The sequence is that of Small ribosomal subunit protein uS2 from Brugia malayi (Filarial nematode worm).